Consider the following 189-residue polypeptide: ATP synthase subunit b (189 aa).

Residues 35–54 form a helical membrane-spanning segment; that stretch reads LLAQMFNFLVLLILLRAVAY.

It belongs to the ATPase B chain family. As to quaternary structure, F-type ATPases have 2 components, F(1) - the catalytic core - and F(0) - the membrane proton channel. F(1) has five subunits: alpha(3), beta(3), gamma(1), delta(1), epsilon(1). F(0) has three main subunits: a(1), b(2) and c(10-14). The alpha and beta chains form an alternating ring which encloses part of the gamma chain. F(1) is attached to F(0) by a central stalk formed by the gamma and epsilon chains, while a peripheral stalk is formed by the delta and b chains.

The protein localises to the cell membrane. Its function is as follows. F(1)F(0) ATP synthase produces ATP from ADP in the presence of a proton or sodium gradient. F-type ATPases consist of two structural domains, F(1) containing the extramembraneous catalytic core and F(0) containing the membrane proton channel, linked together by a central stalk and a peripheral stalk. During catalysis, ATP synthesis in the catalytic domain of F(1) is coupled via a rotary mechanism of the central stalk subunits to proton translocation. In terms of biological role, component of the F(0) channel, it forms part of the peripheral stalk, linking F(1) to F(0). The protein is ATP synthase subunit b of Desulforamulus reducens (strain ATCC BAA-1160 / DSM 100696 / MI-1) (Desulfotomaculum reducens).